The primary structure comprises 46 residues: RDCRSQSKTFVGLCVSDTNCASVCLTEHFPGGKCDGYRRCFCTKDC.

Cystine bridges form between C3–C46, C14–C34, C20–C40, and C24–C42.

Plant defense peptide. This Triticum kiharae (Wheat) protein is Defensin Tk-AMP-D6.